The chain runs to 813 residues: Acyl-homoserine lactone acylase QuiP (813 aa).

The N-terminal stretch at 1–26 (MAAPAFPPFRLRFATAATLLGMLGLA) is a signal peptide. S262 acts as the Nucleophile in catalysis.

Belongs to the peptidase S45 family. As to quaternary structure, heterodimer of an alpha subunit and a beta subunit processed from the same precursor.

It localises to the periplasm. The catalysed reaction is an N-acyl-L-homoserine lactone + H2O = L-homoserine lactone + a carboxylate. In terms of biological role, catalyzes the deacylation of acyl-homoserine lactone (AHL or acyl-HSL), releasing homoserine lactone (HSL) and the corresponding fatty acid. Possesses a specificity for the degradation of long-chain acyl-HSLs (side chains of seven or more carbons in length). The protein is Acyl-homoserine lactone acylase QuiP (quiP) of Pseudomonas putida (strain ATCC 47054 / DSM 6125 / CFBP 8728 / NCIMB 11950 / KT2440).